Consider the following 792-residue polypeptide: Probable exo-1,4-beta-xylosidase xlnD (792 aa).

The signal sequence occupies residues Met-1–Ala-20. Asn-23, Asn-87, Asn-118, Asn-142, and Asn-246 each carry an N-linked (GlcNAc...) asparagine glycan. Asp-310 is an active-site residue. Residues Asn-326, Asn-385, Asn-404, Asn-440, Asn-477, Asn-518, Asn-679, and Asn-701 are each glycosylated (N-linked (GlcNAc...) asparagine).

This sequence belongs to the glycosyl hydrolase 3 family.

The protein resides in the secreted. The enzyme catalyses Hydrolysis of (1-&gt;4)-beta-D-xylans, to remove successive D-xylose residues from the non-reducing termini.. The protein operates within glycan degradation; xylan degradation. Xylan 1,4-beta-xylosidase involved in the hydrolysis of xylan, a major structural heterogeneous polysaccharide found in plant biomass representing the second most abundant polysaccharide in the biosphere, after cellulose. The sequence is that of Probable exo-1,4-beta-xylosidase xlnD (xlnD) from Aspergillus fumigatus (strain CBS 144.89 / FGSC A1163 / CEA10) (Neosartorya fumigata).